Here is a 177-residue protein sequence, read N- to C-terminus: Nucleoside triphosphate/diphosphate phosphatase (177 aa).

The Proton donor role is filled by Arg-23. 6 residues coordinate Mg(2+): Asn-87, Asp-103, Asp-105, Asp-107, Asp-120, and Glu-123.

This sequence belongs to the Ntdp family. Requires Mg(2+) as cofactor.

The catalysed reaction is a ribonucleoside 5'-triphosphate + H2O = a ribonucleoside 5'-diphosphate + phosphate + H(+). The enzyme catalyses a ribonucleoside 5'-diphosphate + H2O = a ribonucleoside 5'-phosphate + phosphate + H(+). Has nucleoside phosphatase activity towards nucleoside triphosphates and nucleoside diphosphates. This is Nucleoside triphosphate/diphosphate phosphatase from Streptococcus uberis (strain ATCC BAA-854 / 0140J).